The sequence spans 165 residues: Chorismate pyruvate-lyase (165 aa).

Met35, Arg77, Leu115, and Glu156 together coordinate substrate.

This sequence belongs to the UbiC family. Monomer.

It is found in the cytoplasm. The catalysed reaction is chorismate = 4-hydroxybenzoate + pyruvate. It participates in cofactor biosynthesis; ubiquinone biosynthesis. Its function is as follows. Removes the pyruvyl group from chorismate, with concomitant aromatization of the ring, to provide 4-hydroxybenzoate (4HB) for the ubiquinone pathway. The sequence is that of Chorismate pyruvate-lyase from Shigella dysenteriae serotype 1 (strain Sd197).